The primary structure comprises 258 residues: Tryptophan synthase alpha chain (258 aa).

Catalysis depends on proton acceptor residues glutamate 47 and aspartate 58.

The protein belongs to the TrpA family. As to quaternary structure, tetramer of two alpha and two beta chains.

The enzyme catalyses (1S,2R)-1-C-(indol-3-yl)glycerol 3-phosphate + L-serine = D-glyceraldehyde 3-phosphate + L-tryptophan + H2O. It participates in amino-acid biosynthesis; L-tryptophan biosynthesis; L-tryptophan from chorismate: step 5/5. Functionally, the alpha subunit is responsible for the aldol cleavage of indoleglycerol phosphate to indole and glyceraldehyde 3-phosphate. The chain is Tryptophan synthase alpha chain from Bacillus cereus (strain ZK / E33L).